The primary structure comprises 168 residues: Mesencephalic astrocyte-derived neurotrophic factor homolog (168 aa).

The N-terminal stretch at 1–17 (MSRLVLLISLVIVVASA) is a signal peptide. Intrachain disulfides connect cysteine 22-cysteine 109, cysteine 25-cysteine 97, cysteine 55-cysteine 66, and cysteine 143-cysteine 146.

Belongs to the ARMET family. In terms of tissue distribution, expressed in the intestine, spermatheca and nervous system. Expressed in the hypoderm. Expressed in structures of the excretory system. Not expressed in the male gonad.

The protein resides in the secreted. The protein localises to the endoplasmic reticulum lumen. Functionally, inhibits endoplasmic reticulum (ER) stress response. Retained in the ER under normal conditions and is up-regulated and secreted by the ER in response to ER stress and hypoxia. Following secretion by the ER, directly binds to 3-O-sulfogalactosylceramide, a lipid sulfatide in the outer cell membrane of target cells. Sulfatide binding promotes its cellular uptake by endocytosis, and is required for its role in alleviating ER stress under ER stress conditions. Has a neuroprotective role, ensuring survival of dopaminergic neurons during normal growth. The sequence is that of Mesencephalic astrocyte-derived neurotrophic factor homolog from Caenorhabditis elegans.